A 527-amino-acid chain; its full sequence is Peptide chain release factor 3 (527 aa).

Residues D9–Q278 enclose the tr-type G domain. Residues S18 to T25, D86 to H90, and N140 to D143 contribute to the GTP site.

This sequence belongs to the TRAFAC class translation factor GTPase superfamily. Classic translation factor GTPase family. PrfC subfamily.

It localises to the cytoplasm. Functionally, increases the formation of ribosomal termination complexes and stimulates activities of RF-1 and RF-2. It binds guanine nucleotides and has strong preference for UGA stop codons. It may interact directly with the ribosome. The stimulation of RF-1 and RF-2 is significantly reduced by GTP and GDP, but not by GMP. This is Peptide chain release factor 3 from Shewanella denitrificans (strain OS217 / ATCC BAA-1090 / DSM 15013).